Here is a 452-residue protein sequence, read N- to C-terminus: tRNA-2-methylthio-N(6)-dimethylallyladenosine synthase (452 aa).

The MTTase N-terminal domain maps to 3-118; sequence KKVFIKTYGC…LPQLLAERER (116 aa). [4Fe-4S] cluster is bound by residues Cys-12, Cys-49, Cys-81, Cys-155, Cys-159, and Cys-162. One can recognise a Radical SAM core domain in the interval 141–379; the sequence is RVEGASAFVS…QTVINDSIKR (239 aa). Residues 382 to 445 enclose the TRAM domain; it reads ESRLGTVQRI…SFTLRGEVVT (64 aa).

This sequence belongs to the methylthiotransferase family. MiaB subfamily. In terms of assembly, monomer. [4Fe-4S] cluster serves as cofactor.

Its subcellular location is the cytoplasm. The catalysed reaction is N(6)-dimethylallyladenosine(37) in tRNA + (sulfur carrier)-SH + AH2 + 2 S-adenosyl-L-methionine = 2-methylsulfanyl-N(6)-dimethylallyladenosine(37) in tRNA + (sulfur carrier)-H + 5'-deoxyadenosine + L-methionine + A + S-adenosyl-L-homocysteine + 2 H(+). Its function is as follows. Catalyzes the methylthiolation of N6-(dimethylallyl)adenosine (i(6)A), leading to the formation of 2-methylthio-N6-(dimethylallyl)adenosine (ms(2)i(6)A) at position 37 in tRNAs that read codons beginning with uridine. The protein is tRNA-2-methylthio-N(6)-dimethylallyladenosine synthase of Albidiferax ferrireducens (strain ATCC BAA-621 / DSM 15236 / T118) (Rhodoferax ferrireducens).